Here is a 3242-residue protein sequence, read N- to C-terminus: tRNA nuclease CdiA (3242 aa).

The N-terminal stretch at 1–32 (MHQPPVRFTYRLLSYLISTIIAGQPLLPAVGA) is a signal peptide. The segment at 36–322 (PQNGAGMDKA…AGGNLSVTGT (287 aa)) is two-partner system transport domain (TPS). An FHA-1 region spans residues 351-1376 (GELTAGQNAM…IVVRTGHLLN (1026 aa)). Residues 1377–1668 (QREGFSATTT…TGQTGISDDW (292 aa)) form a receptor-binding domain (RBD) region. The YP domain stretch occupies residues 1668-1852 (WPLPSGNNGY…LSPEDITLHN (185 aa)). The interval 1853-1913 (GSVISGNNVQ…DLSAIGDISN (61 aa)) is periplasmic FHA-1 repeat (pFR). The FHA-2 stretch occupies residues 2021 to 2631 (DNSASSTTSQ…TSKYDSKQTS (611 aa)). Residues 2075 to 2091 (RESKNSRNGRSESHESH) are compositionally biased toward basic and acidic residues. Disordered stretches follow at residues 2075–2094 (RESKNSRNGRSESHESHAAV), 2310–2333 (GSSKTTHDRREAGTTQSQSASTIG), and 2439–2481 (TMAS…NAGN). The span at 2322-2333 (GTTQSQSASTIG) shows a compositional bias: polar residues. A DUF638-CT domain; not toxic when added to the outside of E.coli, does not interfere with F-pilus mediated conjugation, toxic when expressed intracellularly region spans residues 2969–3242 (GVDPSKLTED…IESALKGYGI (274 aa)). The interval 2972–3015 (PSKLTEDQKQTVSTLATLSAGMAGGIASGDVAGAAAGAGAGKNV) is pre-toxin (PT) domain. The VENN CT cleavage motif signature appears at 3016 to 3019 (VENN). The segment at 3016–3097 (VENNALSLVA…KYLSSLHDKY (82 aa)) is toxin import domain; sufficient to import the tRNA nuclease domain of colicin E5 into E.coli, may bind F-pili. A CT domain; toxic when added to the outside of E.coli and when expressed intracellularly region spans residues 3016 to 3242 (VENNALSLVA…IESALKGYGI (227 aa)). The tract at residues 3020–3141 (ALSLVARGCA…SENDPKQQNE (122 aa)) is inner membrane translocation domain (IMTD), targets protein to FtsH. Residues 3020–3242 (ALSLVARGCA…IESALKGYGI (223 aa)) are C-terminal effector domain (CT). Residues 3098-3242 (GSGAASNPNI…IESALKGYGI (145 aa)) form a tRNase function, does not interfere with F-pilus mediated conjugation region. Residues 3116 to 3146 (KVELGGSGSGTGTPPPSENDPKQQNEKTVDK) are disordered. Positions 3134–3146 (NDPKQQNEKTVDK) are enriched in basic and acidic residues. The stretch at 3137-3238 (KQQNEKTVDK…AINKIESALK (102 aa)) forms a coiled coil. Residues aspartate 3170, histidine 3193, and glutamate 3196 contribute to the active site.

This sequence in the N-terminal section; belongs to the CdiA toxin family. In terms of assembly, the C-terminal (CT) domain interacts with cognate CdiI but not non-cognate CdiI from D.dadantii strain 3937. CdiA-CT also interacts with CysK; this is blocked upon preincubation with O-acetyl-L-serine. CysK forms a complex with CdiA-CT/CdiI. One CdiA toxin subunit binds to each subunit of the CysK homodimer, and one CdiI immunity protein binds to each toxin subunit; the immune complex is thus a dimer of trimers. The 4 C-terminal residues of CdiA fit into the active site of CysK. A divalent metal cation serves as cofactor.

The protein resides in the secreted. Its subcellular location is the target cell membrane. The protein localises to the target cell. It localises to the target cell cytoplasm. Toxic component of a toxin-immunity protein module, which functions as a cellular contact-dependent growth inhibition (CDI) system. CDI modules allow bacteria to communicate with and inhibit the growth of closely related neighboring bacteria in a contact-dependent fashion (target cell counts decrease 100- to 1000-fold). CdiA toxicity is neutralized by its cognate immunity protein CdiI, but not by CdiI from other bacteria. Uses heterotrimeric OmpC and OmpF as target cell outer membrane receptors; receptor function depends on polymorphisms in extracellular loops L4 and L5 of OmpC; interacts with itself and closely related bacteria but also with OmpC from E.cloacae ATCC 13047. Its ability to preferentially bind to 'self' receptors suggests it may also play a role in self-recognition and kin selection. A bamA mutation that decreases its expression about 5-fold is partially resistant to this strain of CdiA, probably due to decreased outer membrane receptor protein assembly. Isolated CdiA-CT is imported in an F-pilus-mediated fashion; CdiA-CT inhibits F-mediated conjugation, probably via its N-terminus (residues 3016-3097), although it is not clear if this is physiologically significant. Gains access to the cytoplasm of target cells by using integral inner membrane protein FtsH. The C-terminal domain (CT) cleaves within tRNA anticodon loops; this activity is inhibited by cognate CdiI. tRNase activity of CdiA-CT is stimulated by CysK, although the extreme C-terminus (residues 3098-3242) has tRNase activity in the absence of CysK. In vivo CDI toxicity requires CysK. CysK stabilizes CdiA-CT, allowing it to bind tRNA substrate; neither CdiA-CT nor CysK bind tRNA alone in vitro. Purified CdiA-CT (residues 3016-3242) inhibits E.coli cell growth when added to cultures alone or in complex with cognate CdiI, growth is inhibited when cognate CdiI is present within the cell but not when a CdiA-CT/CdiI complex is added extracellularly, suggesting CdiA-CT alone but not the CdiA-CT/CdiI complex is imported into the target cell. Its function is as follows. The CdiA protein is thought to be exported from the cell through the central lumen of CdiB, the other half of its two-partner system (TPS). The TPS domain probably remains associated with CdiB while the FHA-1 domain forms an extended filament with the receptor-binding domain (RBD) at its extremity; in the secretion arrested state the C-terminus of the RBD and YP domains form a hairpin-like structure as the FHA-2, PT and CT domains are periplasmic. The YP domain is probably responsible for this arrest at the point where it re-enters the host cell periplasm. Upon binding to a target cell outer membrane receptor (heterotrimeric OmpC-OmpF for this CDI) a signal is transmitted to activate secretion. The filament elongates slightly, the rest of CdiA is secreted and the FHA-2 domain becomes stably associated with the target cell's outer membrane where it facilitates entry of the toxic CT domain into the target cell periplasm. From there the toxic CT domain is cleaved and gains access to the target cell cytoplasm via an inner membrane protein (FtsH for this CDI). This is tRNA nuclease CdiA from Escherichia coli O6:K15:H31 (strain 536 / UPEC).